We begin with the raw amino-acid sequence, 178 residues long: CASP-like protein 4D1 (178 aa).

At alanine 2 the chain carries N-acetylalanine. The Cytoplasmic portion of the chain corresponds to 2-14; sequence APPPPAPPSVTLR. A helical transmembrane segment spans residues 15 to 35; it reads TVLLLLRVLTAAFLLITVVLI. At 36-60 the chain is on the extracellular side; the sequence is STNTVTLEISSTSIKLPFNDVYAYR. The chain crosses the membrane as a helical span at residues 61-81; the sequence is YMLSAAVIGLVYAVVQLFLTI. The Cytoplasmic portion of the chain corresponds to 82-97; that stretch reads SQFATGKTHPLTYQFD. A helical membrane pass occupies residues 98–118; the sequence is FYGDKVISYLLATGSAAGFGV. Residues 119 to 149 are Extracellular-facing; the sequence is SKDLKDTYIALIEFDSTDPVDKFFSKGYASA. Residues 150–170 traverse the membrane as a helical segment; sequence SLLLFAFVSLAVLSVFSSLAL. Topologically, residues 171–178 are cytoplasmic; sequence SKRPVPVS.

This sequence belongs to the Casparian strip membrane proteins (CASP) family. In terms of assembly, homodimer and heterodimers. In terms of tissue distribution, expressed in the root epidermis.

The protein localises to the cell membrane. The protein is CASP-like protein 4D1 of Arabidopsis thaliana (Mouse-ear cress).